A 346-amino-acid polypeptide reads, in one-letter code: UPF0065 protein in the TAR-I ttuE-ttuC' intergenic region (346 aa).

Residues Met1–Ala46 form the signal peptide.

Belongs to the UPF0065 (bug) family.

The protein resides in the periplasm. The protein is UPF0065 protein in the TAR-I ttuE-ttuC' intergenic region of Agrobacterium vitis (Rhizobium vitis).